The sequence spans 469 residues: Zinc transporter SLC39A7 (469 aa).

A helical membrane pass occupies residues 10-30 (WVAVGLLTWATLGLLVAELGG). Basic and acidic residues-rich tracts occupy residues 42–56 (FHGH…DFHH) and 66–114 (HTHE…EHSR). Residues 42–121 (FHGHSHRHSH…HSRGGYGESG (80 aa)) form a disordered region. Histidine 66 is subject to Pros-methylhistidine. 3 consecutive transmembrane segments (helical) span residues 138–158 (ALGA…LIPV), 169–189 (LQIL…LHLI), and 214–234 (GPIL…LVVE). Residues 242 to 263 (GGHGHSHGHGHAHSHTHGSHGH) are compositionally biased toward basic residues. A disordered region spans residues 242-310 (GGHGHSHGHG…VRPQNAEEEK (69 aa)). The span at 264–285 (GRQECSTKEKQSSEEEEKETRG) shows a compositional bias: basic and acidic residues. Phosphoserine is present on residues serine 275 and serine 276. The next 3 membrane-spanning stretches (helical) occupy residues 386–406 (LTAV…GGAV), 410–430 (IAGG…FIYV), and 448–468 (SLLE…IAHL).

The protein belongs to the ZIP transporter (TC 2.A.5) family. KE4/Catsup subfamily. Homodimer. In terms of processing, methylation at some His residue by METTL9 leads to reduced zinc-binding. Rapidly phosphorylated by CK2 following Zn(2+) treatment. This phosphorylation is required for efficient cytosolic Zn(2+) release.

It is found in the endoplasmic reticulum membrane. Its subcellular location is the golgi apparatus. It localises to the cis-Golgi network membrane. The catalysed reaction is Zn(2+)(in) = Zn(2+)(out). In terms of biological role, transports Zn(2+) from the endoplasmic reticulum (ER)/Golgi apparatus to the cytosol, playing an essential role in the regulation of cytosolic zinc levels. Acts as a gatekeeper of zinc release from intracellular stores, requiring post-translational activation by phosphorylation, resulting in activation of multiple downstream pathways leading to cell growth and proliferation. Has an essential role in B cell development and is required for proper B cell receptor signaling. Plays an important role in maintaining intestinal epithelial homeostasis and skin dermis development by regulating ER function. Controls cell signaling pathways involved in glucose metabolism in skeletal muscle. Has a protective role against ER stress in different biological contexts. Mediates Zn(2+)-induced ferroptosis. This is Zinc transporter SLC39A7 from Pongo abelii (Sumatran orangutan).